Reading from the N-terminus, the 237-residue chain is 4-hydroxy-tetrahydrodipicolinate reductase (237 aa).

Residues 11–16 (GASGRM), 92–94 (GTT), and 116–119 (GSNF) contribute to the NAD(+) site. His148 functions as the Proton donor/acceptor in the catalytic mechanism. Residue His149 participates in (S)-2,3,4,5-tetrahydrodipicolinate binding. The active-site Proton donor is Lys152. 158 to 159 (GS) contributes to the (S)-2,3,4,5-tetrahydrodipicolinate binding site.

This sequence belongs to the DapB family.

It is found in the cytoplasm. The catalysed reaction is (S)-2,3,4,5-tetrahydrodipicolinate + NAD(+) + H2O = (2S,4S)-4-hydroxy-2,3,4,5-tetrahydrodipicolinate + NADH + H(+). It carries out the reaction (S)-2,3,4,5-tetrahydrodipicolinate + NADP(+) + H2O = (2S,4S)-4-hydroxy-2,3,4,5-tetrahydrodipicolinate + NADPH + H(+). It functions in the pathway amino-acid biosynthesis; L-lysine biosynthesis via DAP pathway; (S)-tetrahydrodipicolinate from L-aspartate: step 4/4. In terms of biological role, catalyzes the conversion of 4-hydroxy-tetrahydrodipicolinate (HTPA) to tetrahydrodipicolinate. In Xylella fastidiosa (strain M12), this protein is 4-hydroxy-tetrahydrodipicolinate reductase.